A 464-amino-acid polypeptide reads, in one-letter code: F-box/WD repeat-containing protein 12 (464 aa).

The region spanning 1–45 (MEIRLPDLALKRIFSFLDLFGLLQVSQVNKHWNRIADSDYLWRSL) is the F-box domain. 8 WD repeats span residues 89–132 (YKVT…CAWD), 136–174 (GTMIWSSPVQEFHFSNLVTLPQMHLAITMDRKKTIKVWN), 178–217 (RDALAVLPMPQPCYCMEAYLTKDGPFLMVGDAAGDIYTFT), 222–263 (RDVS…FLTE), 270–315 (EGSV…ITFD), 320–367 (KTGG…LLFS), 370–407 (GFLLQRFEDHQAAINNFWVDPCYVLTTSENSVHVYMWE), and 416–461 (RSCC…VMYS).

As to quaternary structure, interacts with SKP1. Interacts with CUL1. Interacts with IL22RA1. As to expression, ubiquitously expressed.

Its pathway is protein modification; protein ubiquitination. Functionally, substrate-recognition component of the SCF (SKP1-CUL1-F-box protein)-type E3 ubiquitin ligase complex. Promotes degradation of interleukin-22 receptor subunit IL22RA1 in resting and IL22-stimulated conditions by facilitating its ubiquitination. Functions as a cell growth suppressor. In Homo sapiens (Human), this protein is F-box/WD repeat-containing protein 12 (FBXW12).